We begin with the raw amino-acid sequence, 122 residues long: Serum amyloid A-1 protein (122 aa).

Positions methionine 1–glycine 19 are cleaved as a signal peptide. Residues glycine 20 to alanine 45 are important for amyloid formation. Over residues histidine 91–lysine 108 the composition is skewed to basic and acidic residues. The segment at histidine 91–tyrosine 122 is disordered.

The protein belongs to the SAA family. In terms of assembly, homohexamer; dimer of trimers. Can form amyloid fibrils after partial proteolysis; the native, undenatured protein does not form amyloid fibrils (in vitro). Apolipoprotein of the HDL complex. Binds to heparin. In terms of tissue distribution, detected in blood plasma (at protein level). Detected in liver.

The protein resides in the secreted. Functionally, major acute phase protein. This chain is Serum amyloid A-1 protein (Saa1), found in Mus musculus (Mouse).